We begin with the raw amino-acid sequence, 572 residues long: Proline--tRNA ligase (572 aa).

Belongs to the class-II aminoacyl-tRNA synthetase family. ProS type 1 subfamily. As to quaternary structure, homodimer.

Its subcellular location is the cytoplasm. It carries out the reaction tRNA(Pro) + L-proline + ATP = L-prolyl-tRNA(Pro) + AMP + diphosphate. Catalyzes the attachment of proline to tRNA(Pro) in a two-step reaction: proline is first activated by ATP to form Pro-AMP and then transferred to the acceptor end of tRNA(Pro). As ProRS can inadvertently accommodate and process non-cognate amino acids such as alanine and cysteine, to avoid such errors it has two additional distinct editing activities against alanine. One activity is designated as 'pretransfer' editing and involves the tRNA(Pro)-independent hydrolysis of activated Ala-AMP. The other activity is designated 'posttransfer' editing and involves deacylation of mischarged Ala-tRNA(Pro). The misacylated Cys-tRNA(Pro) is not edited by ProRS. The sequence is that of Proline--tRNA ligase from Salmonella arizonae (strain ATCC BAA-731 / CDC346-86 / RSK2980).